We begin with the raw amino-acid sequence, 569 residues long: F-box/WD repeat-containing protein 5 (569 aa).

Residues 3–49 (EGGMPLLPDSLVYQIFLSLGPADVLAAGLVCRQWQAVSRDEFLWREQ) enclose the F-box domain. Residues 90 to 129 (EHTDQVLHLSFSHSGYQFASCSKDCTVKIWNNDLTISLLH) form a WD 1 repeat. At Ser151 the chain carries Phosphoserine; by PLK4. The D-box signature appears at 308–316 (RRVFDSVLD). 2 WD repeats span residues 470 to 509 (TPNDECFFIFLDVSRDFVASGAEDRHGYIWDRHYNICLAK) and 511 to 551 (RHED…RVLQ).

The protein belongs to the FBXW5 family. As to quaternary structure, part of the SCF (SKP1-CUL1-F-box) E3 ubiquitin-protein ligase complex SCF(FBXW5) composed of CUL1, SKP1, RBX1 and FBXW5. Component of the DCX(FBXW5) E3 ubiquitin ligase complex, at least composed of (CUL4A or CUL4B), DDB1, FBXW5 and RBX1. Interacts with CDC20, EPS8, TSC1, TSC2 and SASS6. Interacts with TNFAIP8L1; TNFAIP8L1 competes with TSC2 to bind FBXW5 increasing TSC2 stability by preventing its ubiquitination. In terms of processing, phosphorylated at Ser-151 by PLK4 during the G1/S transition, leading to inhibit its ability to ubiquitinate SASS6. Post-translationally, ubiquitinated and degraded by the APC/C complex during mitosis and G1 phase.

Its subcellular location is the cytoplasm. It functions in the pathway protein modification; protein ubiquitination. In terms of biological role, substrate recognition component of both SCF (SKP1-CUL1-F-box protein) and DCX (DDB1-CUL4-X-box) E3 ubiquitin-protein ligase complexes. Substrate recognition component of the SCF(FBXW5) E3 ubiquitin-protein ligase complex which mediates the ubiquitination and subsequent proteasomal degradation of SASS6 during S phase, leading to prevent centriole reduplication. The SCF(FBXW5) complex also mediates ubiquitination and degradation of actin-regulator EPS8 during G2 phase, leading to the transient degradation of EPS8 and subsequent cell shape changes required to allow mitotic progression. Substrate-specific adapter of the DCX(FBXW5) E3 ubiquitin-protein ligase complex which mediates the polyubiquitination and subsequent degradation of TSC2. May also act as a negative regulator of MAP3K7/TAK1 signaling in the interleukin-1B (IL1B) signaling pathway. This Rattus norvegicus (Rat) protein is F-box/WD repeat-containing protein 5 (Fbxw5).